Here is a 283-residue protein sequence, read N- to C-terminus: Putative UTP--glucose-1-phosphate uridylyltransferase (283 aa).

It belongs to the UDPGP type 2 family.

It catalyses the reaction alpha-D-glucose 1-phosphate + UTP + H(+) = UDP-alpha-D-glucose + diphosphate. This Methanocaldococcus jannaschii (strain ATCC 43067 / DSM 2661 / JAL-1 / JCM 10045 / NBRC 100440) (Methanococcus jannaschii) protein is Putative UTP--glucose-1-phosphate uridylyltransferase.